A 437-amino-acid polypeptide reads, in one-letter code: ATP-dependent RNA helicase RhlB (437 aa).

Residues 9 to 37 carry the Q motif motif; sequence QKFADLGLEPTVLEGLDAQGFHYCTPIQA. In terms of domain architecture, Helicase ATP-binding spans 40–219; sequence LPVVLTGQDI…FEHMNSPESV (180 aa). 53–60 contributes to the ATP binding site; sequence AQTGTGKT. Residues 165 to 168 carry the DEAD box motif; it reads DEAD. A Helicase C-terminal domain is found at 245-390; that stretch reads RLLQTLIEEE…LSKYNSEALL (146 aa). Positions 395 to 437 are disordered; it reads APLRLQRTPRQGGNRRPNGNRQGQGQSRPRNNNRRHPQSQKQQ. Residues 400 to 424 are compositionally biased toward low complexity; it reads QRTPRQGGNRRPNGNRQGQGQSRPR. Positions 425-437 are enriched in basic residues; that stretch reads NNNRRHPQSQKQQ.

It belongs to the DEAD box helicase family. RhlB subfamily. In terms of assembly, component of the RNA degradosome, which is a multiprotein complex involved in RNA processing and mRNA degradation.

Its subcellular location is the cytoplasm. It catalyses the reaction ATP + H2O = ADP + phosphate + H(+). DEAD-box RNA helicase involved in RNA degradation. Has RNA-dependent ATPase activity and unwinds double-stranded RNA. In Photobacterium profundum (strain SS9), this protein is ATP-dependent RNA helicase RhlB.